The following is a 1002-amino-acid chain: SIT4-associating protein SAP155 (1002 aa).

Disordered stretches follow at residues 51 to 131 (GTSD…APMM), 214 to 273 (QQQL…ANED), 609 to 645 (EQLK…ESDY), 868 to 901 (DNTT…GGGQ), and 940 to 1002 (NTEN…YDHE). Position 58 is a phosphoserine (S58). The span at 62–97 (EYSHGDEVKTARGDQKSRFEKDDQQERYEKEEEERS) shows a compositional bias: basic and acidic residues. Positions 98-114 (MNSSESSTTSFSSGSTS) are enriched in low complexity. The segment covering 220–241 (SSQEDVYVESDTEQEEEKEDDN) has biased composition (acidic residues). S255 is subject to Phosphoserine. Acidic residues predominate over residues 262-273 (NNNDDDDDANED). Residues 609-626 (EQLKTKHSPTRDTDHDLK) show a composition bias toward basic and acidic residues. Residues T613 and T618 each carry the phosphothreonine modification. Residues 635–645 (DNNDNDDESDY) are compositionally biased toward acidic residues. Positions 868-885 (DNTTVLTPNGDASNNNEI) are enriched in polar residues. Low complexity predominate over residues 956-976 (SNSNINNTNHNSNNSNNNDNN). Over residues 991 to 1002 (EDADNDNDYDHE) the composition is skewed to acidic residues.

Belongs to the SAPS family. Associates with the SIT4 protein phosphatase catalytic subunit in a cell-cycle-dependent manner. In terms of processing, hyperphosphorylated in the absence of SIT4.

It localises to the cytoplasm. Its function is as follows. Positive regulator of protein phosphatase SIT4. Involved in directing expression of TOR-repressed genes and in dephosphorylation of NPR1 in response to nutrient starvation. Negatively modulates K(+) efflux of the cell by the Na(+)-K(+)/H(+) antiporter NHA1. This Saccharomyces cerevisiae (strain ATCC 204508 / S288c) (Baker's yeast) protein is SIT4-associating protein SAP155 (SAP155).